The sequence spans 434 residues: Enolase (434 aa).

Residue Gln-168 participates in (2R)-2-phosphoglycerate binding. Glu-210 acts as the Proton donor in catalysis. Mg(2+)-binding residues include Asp-247, Glu-292, and Asp-319. 4 residues coordinate (2R)-2-phosphoglycerate: Lys-344, Arg-373, Ser-374, and Lys-395. Lys-344 acts as the Proton acceptor in catalysis.

Belongs to the enolase family. Requires Mg(2+) as cofactor.

The protein resides in the cytoplasm. The protein localises to the secreted. It is found in the cell surface. It carries out the reaction (2R)-2-phosphoglycerate = phosphoenolpyruvate + H2O. Its pathway is carbohydrate degradation; glycolysis; pyruvate from D-glyceraldehyde 3-phosphate: step 4/5. Its function is as follows. Catalyzes the reversible conversion of 2-phosphoglycerate (2-PG) into phosphoenolpyruvate (PEP). It is essential for the degradation of carbohydrates via glycolysis. In Endomicrobium trichonymphae, this protein is Enolase.